The primary structure comprises 541 residues: ATP synthase subunit alpha (541 aa).

An ATP-binding site is contributed by 173–180 (GDRQTGKT). Residues 517–527 (GIEPGVEEHES) are compositionally biased toward basic and acidic residues. Residues 517–541 (GIEPGVEEHESLGATAVNQETIVKK) are disordered. Residues 532–541 (AVNQETIVKK) show a composition bias toward polar residues.

It belongs to the ATPase alpha/beta chains family. As to quaternary structure, F-type ATPases have 2 components, CF(1) - the catalytic core - and CF(0) - the membrane proton channel. CF(1) has five subunits: alpha(3), beta(3), gamma(1), delta(1), epsilon(1). CF(0) has three main subunits: a(1), b(2) and c(9-12). The alpha and beta chains form an alternating ring which encloses part of the gamma chain. CF(1) is attached to CF(0) by a central stalk formed by the gamma and epsilon chains, while a peripheral stalk is formed by the delta and b chains.

Its subcellular location is the cell membrane. The enzyme catalyses ATP + H2O + 4 H(+)(in) = ADP + phosphate + 5 H(+)(out). Produces ATP from ADP in the presence of a proton gradient across the membrane. The alpha chain is a regulatory subunit. In Kocuria rhizophila (strain ATCC 9341 / DSM 348 / NBRC 103217 / DC2201), this protein is ATP synthase subunit alpha.